The chain runs to 80 residues: MGISMWQLLIVLLIIVLLFGTKKLKNIGGDLGGAVKGFKKAMSDGESEEDKEPKKLSQNESRTIEGSVERNDAKTESKHS.

Residues 1–21 (MGISMWQLLIVLLIIVLLFGT) traverse the membrane as a helical segment. The disordered stretch occupies residues 39–80 (KKAMSDGESEEDKEPKKLSQNESRTIEGSVERNDAKTESKHS). Positions 67–80 (SVERNDAKTESKHS) are enriched in basic and acidic residues.

The protein belongs to the TatA/E family. As to quaternary structure, the Tat system comprises two distinct complexes: a TatABC complex, containing multiple copies of TatA, TatB and TatC subunits, and a separate TatA complex, containing only TatA subunits. Substrates initially bind to the TatABC complex, which probably triggers association of the separate TatA complex to form the active translocon.

The protein resides in the cell inner membrane. Its function is as follows. Part of the twin-arginine translocation (Tat) system that transports large folded proteins containing a characteristic twin-arginine motif in their signal peptide across membranes. TatA could form the protein-conducting channel of the Tat system. This Hahella chejuensis (strain KCTC 2396) protein is Sec-independent protein translocase protein TatA.